Reading from the N-terminus, the 384-residue chain is uncharacterized protein (384 aa).

Residues 137–303 (EHDAPNRLWQ…VPGSRYQPSA (167 aa)) enclose the Integrase catalytic domain.

This is an uncharacterized protein from Escherichia coli (strain K12).